The chain runs to 156 residues: Transcription antitermination protein NusB (156 aa).

Belongs to the NusB family.

Functionally, involved in transcription antitermination. Required for transcription of ribosomal RNA (rRNA) genes. Binds specifically to the boxA antiterminator sequence of the ribosomal RNA (rrn) operons. In Rickettsia conorii (strain ATCC VR-613 / Malish 7), this protein is Transcription antitermination protein NusB.